Reading from the N-terminus, the 235-residue chain is (5-formylfuran-3-yl)methyl phosphate synthase (235 aa).

Lys-27 (schiff-base intermediate with substrate) is an active-site residue. Lys-85 acts as the Proton acceptor in catalysis.

The protein belongs to the MfnB family.

The enzyme catalyses 2 D-glyceraldehyde 3-phosphate = 4-(hydroxymethyl)-2-furancarboxaldehyde phosphate + phosphate + 2 H2O. Its pathway is cofactor biosynthesis; methanofuran biosynthesis. Functionally, catalyzes the formation of 4-(hydroxymethyl)-2-furancarboxaldehyde phosphate (4-HFC-P) from two molecules of glyceraldehyde-3-P (GA-3-P). In Methanococcus aeolicus (strain ATCC BAA-1280 / DSM 17508 / OCM 812 / Nankai-3), this protein is (5-formylfuran-3-yl)methyl phosphate synthase.